A 1257-amino-acid chain; its full sequence is Pesticidal crystal protein Cry12Aa (1257 aa).

The protein belongs to the delta endotoxin family.

Functionally, endotoxin with nematicidal activity. The protein is Pesticidal crystal protein Cry12Aa (cry12Aa) of Bacillus thuringiensis.